The primary structure comprises 496 residues: 7,8-epoxymelianol synthase CYP88A154 (496 aa).

The chain crosses the membrane as a helical span at residues 11-31 (FNFLWLILAIFVGTYVVLFGF). C444 provides a ligand contact to heme.

This sequence belongs to the cytochrome P450 family. It depends on heme as a cofactor.

The protein resides in the membrane. It catalyses the reaction melianol + reduced [NADPH--hemoprotein reductase] + O2 = 7,8-epoxymelianol + oxidized [NADPH--hemoprotein reductase] + H2O + H(+). The protein operates within secondary metabolite biosynthesis; terpenoid biosynthesis. Functionally, monooxygenase involved in the biosynthesis of glabretanes, limonoids and quassinoids triterpene natural products such as ailanthone, chaparrinone, glaucarubinone and amarolide, allelopathic degraded triterpene lactones inhibiting the growth of other plants, and possessing antimalarial, antifeedant, insecticidal, anti-inflammatory and anticancer activities. Catalyzes the epoxidation of melianol to produce 7,8-epoxymelianol. In Ailanthus altissima (Tree-of-heaven), this protein is 7,8-epoxymelianol synthase CYP88A154.